An 83-amino-acid polypeptide reads, in one-letter code: MTLQNESINRVENRKKYCRFKKMGIFYIDYKDPNFLLKFVNEQGKILPRRLTGTSLKYQRKVSQAVKRARLIGLLPYVTDSLK.

It belongs to the bacterial ribosomal protein bS18 family. Part of the 30S ribosomal subunit. Forms a tight heterodimer with protein bS6.

Its function is as follows. Binds as a heterodimer with protein bS6 to the central domain of the 16S rRNA, where it helps stabilize the platform of the 30S subunit. This Cytophaga hutchinsonii (strain ATCC 33406 / DSM 1761 / CIP 103989 / NBRC 15051 / NCIMB 9469 / D465) protein is Small ribosomal subunit protein bS18.